We begin with the raw amino-acid sequence, 357 residues long: UDP-3-O-acylglucosamine N-acyltransferase (357 aa).

The active-site Proton acceptor is H251.

It belongs to the transferase hexapeptide repeat family. LpxD subfamily. Homotrimer.

It carries out the reaction a UDP-3-O-[(3R)-3-hydroxyacyl]-alpha-D-glucosamine + a (3R)-hydroxyacyl-[ACP] = a UDP-2-N,3-O-bis[(3R)-3-hydroxyacyl]-alpha-D-glucosamine + holo-[ACP] + H(+). It participates in bacterial outer membrane biogenesis; LPS lipid A biosynthesis. In terms of biological role, catalyzes the N-acylation of UDP-3-O-acylglucosamine using 3-hydroxyacyl-ACP as the acyl donor. Is involved in the biosynthesis of lipid A, a phosphorylated glycolipid that anchors the lipopolysaccharide to the outer membrane of the cell. The polypeptide is UDP-3-O-acylglucosamine N-acyltransferase (Ralstonia pickettii (strain 12J)).